Reading from the N-terminus, the 95-residue chain is Aspartyl/glutamyl-tRNA(Asn/Gln) amidotransferase subunit C (95 aa).

It belongs to the GatC family. In terms of assembly, heterotrimer of A, B and C subunits.

It catalyses the reaction L-glutamyl-tRNA(Gln) + L-glutamine + ATP + H2O = L-glutaminyl-tRNA(Gln) + L-glutamate + ADP + phosphate + H(+). The catalysed reaction is L-aspartyl-tRNA(Asn) + L-glutamine + ATP + H2O = L-asparaginyl-tRNA(Asn) + L-glutamate + ADP + phosphate + 2 H(+). In terms of biological role, allows the formation of correctly charged Asn-tRNA(Asn) or Gln-tRNA(Gln) through the transamidation of misacylated Asp-tRNA(Asn) or Glu-tRNA(Gln) in organisms which lack either or both of asparaginyl-tRNA or glutaminyl-tRNA synthetases. The reaction takes place in the presence of glutamine and ATP through an activated phospho-Asp-tRNA(Asn) or phospho-Glu-tRNA(Gln). This chain is Aspartyl/glutamyl-tRNA(Asn/Gln) amidotransferase subunit C, found in Dechloromonas aromatica (strain RCB).